The primary structure comprises 121 residues: Small ribosomal subunit protein eS24 (121 aa).

The protein belongs to the eukaryotic ribosomal protein eS24 family.

In Pyrobaculum aerophilum (strain ATCC 51768 / DSM 7523 / JCM 9630 / CIP 104966 / NBRC 100827 / IM2), this protein is Small ribosomal subunit protein eS24.